Reading from the N-terminus, the 755-residue chain is Leucine-rich repeat-containing protein 36 (755 aa).

LRR repeat units lie at residues S51–C72 and S73–Q94. The LRRCT domain occupies N107–H146. Disordered regions lie at residues G354 to H374 and L448 to S517. Residues N356–A370 show a composition bias toward basic and acidic residues. Positions L498–G510 are enriched in low complexity. The stretch at V601–E671 forms a coiled coil. The segment at Y701–S755 is disordered. Residues F721 to P731 show a composition bias toward polar residues.

This Mus musculus (Mouse) protein is Leucine-rich repeat-containing protein 36 (Lrrc36).